The chain runs to 129 residues: Large ribosomal subunit protein bL20 (129 aa).

Belongs to the bacterial ribosomal protein bL20 family.

Its function is as follows. Binds directly to 23S ribosomal RNA and is necessary for the in vitro assembly process of the 50S ribosomal subunit. It is not involved in the protein synthesizing functions of that subunit. In Mycolicibacterium gilvum (strain PYR-GCK) (Mycobacterium gilvum (strain PYR-GCK)), this protein is Large ribosomal subunit protein bL20.